A 153-amino-acid polypeptide reads, in one-letter code: Deoxyuridine 5'-triphosphate nucleotidohydrolase (153 aa).

Residues 65–67 (RSG), Asn-78, and 82–84 (TID) contribute to the substrate site. The segment at 132–153 (MTQRGEGGFGHTGISAVHPRTH) is disordered.

This sequence belongs to the dUTPase family. The cofactor is Mg(2+).

It carries out the reaction dUTP + H2O = dUMP + diphosphate + H(+). Its pathway is pyrimidine metabolism; dUMP biosynthesis; dUMP from dCTP (dUTP route): step 2/2. This enzyme is involved in nucleotide metabolism: it produces dUMP, the immediate precursor of thymidine nucleotides and it decreases the intracellular concentration of dUTP so that uracil cannot be incorporated into DNA. This chain is Deoxyuridine 5'-triphosphate nucleotidohydrolase, found in Chlorobium limicola (strain DSM 245 / NBRC 103803 / 6330).